Consider the following 115-residue polypeptide: Protein translation factor SUI1 homolog (115 aa).

This sequence belongs to the SUI1 family. In terms of tissue distribution, expressed in all tissues examined.

In terms of biological role, probably involved in translation. This Oryza sativa subsp. indica (Rice) protein is Protein translation factor SUI1 homolog (GOS2).